The primary structure comprises 148 residues: MEQTFIMIKPDGVQSGLVGEIIGRFEKKGFSLKGLKLLTVDRAFAEKHYADLSSKPFFNGLVEYIVSGPVVAMVWEGKNVVTTGREIIGATNPAESAPGTIRGDFAIDIGRNVIHGSDAVESARKVIGLWFPEGVANWSSSLHPWIYE.

ATP-binding residues include K9, F57, R85, T91, R102, and N112. The Pros-phosphohistidine intermediate role is filled by H115.

This sequence belongs to the NDK family. Mg(2+) is required as a cofactor.

It catalyses the reaction a 2'-deoxyribonucleoside 5'-diphosphate + ATP = a 2'-deoxyribonucleoside 5'-triphosphate + ADP. It carries out the reaction a ribonucleoside 5'-diphosphate + ATP = a ribonucleoside 5'-triphosphate + ADP. In terms of biological role, major role in the synthesis of nucleoside triphosphates other than ATP. The ATP gamma phosphate is transferred to the NDP beta phosphate via a ping-pong mechanism, using a phosphorylated active-site intermediate. The chain is Nucleoside diphosphate kinase A from Flaveria bidentis (Coastal plain yellowtops).